We begin with the raw amino-acid sequence, 263 residues long: uncharacterized protein (263 aa).

Positions 1–22 are cleaved as a signal peptide; it reads MGYLKRLVLYIVIMVMSVFIIG. A lipid anchor (N-palmitoyl cysteine) is attached at cysteine 23. Cysteine 23 carries S-diacylglycerol cysteine lipidation.

The protein belongs to the staphylococcal tandem lipoprotein family.

It is found in the cell membrane. This is an uncharacterized protein from Staphylococcus aureus (strain N315).